The primary structure comprises 174 residues: MMKFMCIFICAVAAVSASGYGGRRPSYGSAPIGAYAYQVQPALTVKAIIPSYGGQRGYGHNQGGYEAAPIASAYGNADIGNQYGPVSGSRYGGAPPVDREAIALAKLALAAPSAGGPLVWREAPRRVQHAYGPSNYGAPQQRYARAEEAQGASAAAASSSVAGVAKKGYRKSSY.

A signal peptide spans 1–17 (MMKFMCIFICAVAAVSA). A compositionally biased stretch (low complexity) spans 154–165 (AAAASSSVAGVA). A disordered region spans residues 154 to 174 (AAAASSSVAGVAKKGYRKSSY).

This sequence belongs to the chorion protein S15/S18 family.

The protein localises to the secreted. Functionally, chorion membrane (egg shell) protein; plays a role in protecting the egg from the environment. This is Chorion protein S18 (Cp18) from Drosophila subobscura (Fruit fly).